A 374-amino-acid polypeptide reads, in one-letter code: Beta-lytic metalloendopeptidase (374 aa).

The N-terminal stretch at 1–24 (MKKISKAGLGLALVCALATIGGNA) is a signal peptide. The propeptide occupies 25 to 195 (ARRATAQRRG…RQGRPGRAAV (171 aa)). Residues 128 to 187 (PTRQGAGDAGPRQSAAGAVRAFRRQRAGGRAARRRRVPAGLRPPVQRTAPGQGGFGPLRQ) are disordered. Positions 148–164 (AFRRQRAGGRAARRRRV) are enriched in basic residues. A disulfide bond links Cys-261 and Cys-307. Residues His-316 and His-318 each coordinate Zn(2+). Cys-351 and Cys-364 are disulfide-bonded.

This sequence belongs to the peptidase M23A family. Zn(2+) serves as cofactor.

Its subcellular location is the secreted. It carries out the reaction Cleavage of N-acetylmuramoyl-|-Ala, and of the insulin B chain at 23-Gly-|-Phe-24 &gt; 18-Val-|-Cys(SO3H).. The protein is Beta-lytic metalloendopeptidase of Achromobacter lyticus.